A 702-amino-acid chain; its full sequence is Elongation factor G (702 aa).

One can recognise a tr-type G domain in the interval Asp8–Leu286. Residues Ala17–Thr24, Asp85–His89, and Asn139–Asp142 contribute to the GTP site.

The protein belongs to the TRAFAC class translation factor GTPase superfamily. Classic translation factor GTPase family. EF-G/EF-2 subfamily.

Its subcellular location is the cytoplasm. Catalyzes the GTP-dependent ribosomal translocation step during translation elongation. During this step, the ribosome changes from the pre-translocational (PRE) to the post-translocational (POST) state as the newly formed A-site-bound peptidyl-tRNA and P-site-bound deacylated tRNA move to the P and E sites, respectively. Catalyzes the coordinated movement of the two tRNA molecules, the mRNA and conformational changes in the ribosome. The polypeptide is Elongation factor G (Chloroflexus aurantiacus (strain ATCC 29366 / DSM 635 / J-10-fl)).